We begin with the raw amino-acid sequence, 103 residues long: Small ribosomal subunit protein uS10 (103 aa).

This sequence belongs to the universal ribosomal protein uS10 family. As to quaternary structure, part of the 30S ribosomal subunit.

Involved in the binding of tRNA to the ribosomes. This chain is Small ribosomal subunit protein uS10, found in Helicobacter hepaticus (strain ATCC 51449 / 3B1).